Consider the following 466-residue polypeptide: Acetylornithine aminotransferase, mitochondrial (466 aa).

Residue lysine 308 is modified to N6-(pyridoxal phosphate)lysine.

It belongs to the class-III pyridoxal-phosphate-dependent aminotransferase family. Pyridoxal 5'-phosphate serves as cofactor.

It localises to the mitochondrion matrix. The enzyme catalyses N(2)-acetyl-L-ornithine + 2-oxoglutarate = N-acetyl-L-glutamate 5-semialdehyde + L-glutamate. It functions in the pathway amino-acid biosynthesis; L-arginine biosynthesis; N(2)-acetyl-L-ornithine from L-glutamate: step 4/4. In Debaryomyces hansenii (strain ATCC 36239 / CBS 767 / BCRC 21394 / JCM 1990 / NBRC 0083 / IGC 2968) (Yeast), this protein is Acetylornithine aminotransferase, mitochondrial (ARG8).